The chain runs to 283 residues: MEIIERAPAKINLGLDVLHKRVDGYHEVESIFASVDLADHLTFENLEEDIIRIETDSSFLPVDRRNHVYQAVDLLKRTYNIHKGIKIYIEKRIPVAAGLAGGSSDCAAALRGLNKLWNLGLTMDELCEIGSQIGMDVPYCLRGGTAFANGRGEKIEALPTMPQCWIVLVKPRISVSTSTVFNDLAVDELHHPDIAGLRIAIENGDYTGMTQTVGNALESVTIARHPIVQQIKDRMLKYGADAALMSGSGPTVFALCEKKTRAQRIYNGLKGFCEEVYLVRTLK.

The active site involves Lys10. 94-104 (PVAAGLAGGSS) serves as a coordination point for ATP. Residue Asp136 is part of the active site.

This sequence belongs to the GHMP kinase family. IspE subfamily.

It carries out the reaction 4-CDP-2-C-methyl-D-erythritol + ATP = 4-CDP-2-C-methyl-D-erythritol 2-phosphate + ADP + H(+). It participates in isoprenoid biosynthesis; isopentenyl diphosphate biosynthesis via DXP pathway; isopentenyl diphosphate from 1-deoxy-D-xylulose 5-phosphate: step 3/6. Catalyzes the phosphorylation of the position 2 hydroxy group of 4-diphosphocytidyl-2C-methyl-D-erythritol. The chain is 4-diphosphocytidyl-2-C-methyl-D-erythritol kinase from Enterococcus faecalis (strain ATCC 700802 / V583).